We begin with the raw amino-acid sequence, 3333 residues long: Laminin subunit alpha-3 (3333 aa).

The signal sequence occupies residues Met-1–Thr-35. Residues Ala-43–Gln-298 form the Laminin N-terminal domain. Residues Asn-142 and Asn-242 are each glycosylated (N-linked (GlcNAc...) asparagine). The segment at Gln-298 to His-728 is domain V. 29 disulfide bridges follow: Cys-299/Cys-308, Cys-301/Cys-319, Cys-321/Cys-330, Cys-333/Cys-353, Cys-356/Cys-365, Cys-358/Cys-390, Cys-393/Cys-402, Cys-405/Cys-423, Cys-426/Cys-436, Cys-428/Cys-443, Cys-445/Cys-454, Cys-457/Cys-467, Cys-491/Cys-503, Cys-493/Cys-509, Cys-511/Cys-520, Cys-523/Cys-533, Cys-536/Cys-548, Cys-538/Cys-555, Cys-557/Cys-566, Cys-569/Cys-586, Cys-601/Cys-610, Cys-613/Cys-628, Cys-631/Cys-645, Cys-633/Cys-652, Cys-654/Cys-663, Cys-666/Cys-681, Cys-684/Cys-696, Cys-686/Cys-703, and Cys-705/Cys-714. Laminin EGF-like domains lie at Cys-299–Ala-355, Cys-356–Pro-425, Cys-426–Arg-469, Cys-491–Ala-535, Cys-536–Pro-588, Gly-590–Glu-630, Cys-631–Gly-683, and Cys-684–His-728. Positions Thr-796–Pro-1265 are domain IV 1 (domain IV B). Cystine bridges form between Cys-1266–Cys-1278, Cys-1268–Cys-1285, Cys-1287–Cys-1296, Cys-1299–Cys-1309, Cys-1312–Cys-1319, Cys-1314–Cys-1326, Cys-1328–Cys-1337, Cys-1340–Cys-1353, Cys-1356–Cys-1371, Cys-1358–Cys-1378, Cys-1380–Cys-1389, Cys-1392–Cys-1402, Cys-1405–Cys-1417, Cys-1407–Cys-1424, Cys-1426–Cys-1435, and Cys-1438–Cys-1453. Laminin EGF-like domains follow at residues Cys-1266 to Pro-1311, Cys-1312 to Gly-1355, Cys-1356 to Pro-1404, and Cys-1405 to Ser-1455. Residues Cys-1266 to Cys-1465 are domain III B. The Laminin IV type A domain maps to Val-1476–Ile-1653. The tract at residues Cys-1654–Asp-1821 is domain III A. Cystine bridges form between Cys-1687–Cys-1696, Cys-1689–Cys-1703, Cys-1706–Cys-1715, Cys-1718–Cys-1731, Cys-1734–Cys-1746, Cys-1736–Cys-1755, Cys-1757–Cys-1766, and Cys-1769–Cys-1784. 2 Laminin EGF-like domains span residues Cys-1687–Ala-1733 and Cys-1734–Pro-1786. The Laminin EGF-like 15; truncated domain occupies Cys-1787–Asp-1821. Residues Cys-1822–Val-2389 are domain II and I. Coiled-coil stretches lie at residues Ala-1852–Ile-1941 and Lys-1987–Val-2169. The short motif at Arg-2278–Asp-2280 is the Cell attachment site element. A coiled-coil region spans residues Arg-2322–Ala-2388. 3 N-linked (GlcNAc...) asparagine glycosylation sites follow: Asn-2365, Asn-2502, and Asn-2584. Laminin G-like domains lie at Pro-2390–Cys-2591, Ser-2598–Cys-2760, Val-2767–Cys-2927, Ala-2986–Cys-3150, and Lys-3157–Cys-3330. 5 disulfides stabilise this stretch: Cys-2561-Cys-2591, Cys-2737-Cys-2760, Cys-2895-Cys-2927, Cys-3127-Cys-3150, and Cys-3302-Cys-3330.

In terms of assembly, laminin is a complex glycoprotein, consisting of three different polypeptide chains (alpha, beta, gamma), which are bound to each other by disulfide bonds into a cross-shaped molecule comprising one long and three short arms with globules at each end. Alpha-3 is a subunit of laminin-5 (laminin-332 or epiligrin/kalinin/nicein), laminin-6 (laminin-311 or K-laminin) and laminin-7 (laminin-321 or KS-laminin). Skin; respiratory, urinary, and digestive epithelia and in other specialized tissues with prominent secretory or protective functions. Epithelial basement membrane, and epithelial cell tongue that migrates into a wound bed. A differential and focal expression of the subunit alpha-3 is observed in the CNS.

The protein resides in the secreted. The protein localises to the extracellular space. It is found in the extracellular matrix. It localises to the basement membrane. Binding to cells via a high affinity receptor, laminin is thought to mediate the attachment, migration and organization of cells into tissues during embryonic development by interacting with other extracellular matrix components. In terms of biological role, laminin-5 is thought to be involved in (1) cell adhesion via integrin alpha-3/beta-1 in focal adhesion and integrin alpha-6/beta-4 in hemidesmosomes, (2) signal transduction via tyrosine phosphorylation of pp125-FAK and p80, (3) differentiation of keratinocytes. The chain is Laminin subunit alpha-3 (LAMA3) from Homo sapiens (Human).